A 188-amino-acid polypeptide reads, in one-letter code: Phosphoribosylglycinamide formyltransferase (188 aa).

Glycine 12–asparagine 14 provides a ligand contact to N(1)-(5-phospho-beta-D-ribosyl)glycinamide. Residues lysine 66, methionine 91–valine 94, and asparagine 108 contribute to the (6R)-10-formyltetrahydrofolate site. Residue histidine 110 is the Proton donor of the active site.

It belongs to the GART family.

It carries out the reaction N(1)-(5-phospho-beta-D-ribosyl)glycinamide + (6R)-10-formyltetrahydrofolate = N(2)-formyl-N(1)-(5-phospho-beta-D-ribosyl)glycinamide + (6S)-5,6,7,8-tetrahydrofolate + H(+). It functions in the pathway purine metabolism; IMP biosynthesis via de novo pathway; N(2)-formyl-N(1)-(5-phospho-D-ribosyl)glycinamide from N(1)-(5-phospho-D-ribosyl)glycinamide (10-formyl THF route): step 1/1. Catalyzes the transfer of a formyl group from 10-formyltetrahydrofolate to 5-phospho-ribosyl-glycinamide (GAR), producing 5-phospho-ribosyl-N-formylglycinamide (FGAR) and tetrahydrofolate. In Staphylococcus epidermidis (strain ATCC 35984 / DSM 28319 / BCRC 17069 / CCUG 31568 / BM 3577 / RP62A), this protein is Phosphoribosylglycinamide formyltransferase.